A 146-amino-acid polypeptide reads, in one-letter code: Mite group 2 allergen Der f 2 (146 aa).

The N-terminal stretch at Met1–Ala17 is a signal peptide. 3 disulfides stabilise this stretch: Cys25-Cys136, Cys38-Cys44, and Cys90-Cys95.

Belongs to the NPC2 family.

It localises to the secreted. The polypeptide is Mite group 2 allergen Der f 2 (DERF2) (Dermatophagoides farinae (American house dust mite)).